Consider the following 320-residue polypeptide: Acetyl-coenzyme A carboxylase carboxyl transferase subunit alpha (320 aa).

The 254-residue stretch at 42–295 (IEEKAVQALN…GDAIAAAFAE (254 aa)) folds into the CoA carboxyltransferase C-terminal domain.

It belongs to the AccA family. Acetyl-CoA carboxylase is a heterohexamer composed of biotin carboxyl carrier protein (AccB), biotin carboxylase (AccC) and two subunits each of ACCase subunit alpha (AccA) and ACCase subunit beta (AccD).

The protein resides in the cytoplasm. It catalyses the reaction N(6)-carboxybiotinyl-L-lysyl-[protein] + acetyl-CoA = N(6)-biotinyl-L-lysyl-[protein] + malonyl-CoA. The protein operates within lipid metabolism; malonyl-CoA biosynthesis; malonyl-CoA from acetyl-CoA: step 1/1. Functionally, component of the acetyl coenzyme A carboxylase (ACC) complex. First, biotin carboxylase catalyzes the carboxylation of biotin on its carrier protein (BCCP) and then the CO(2) group is transferred by the carboxyltransferase to acetyl-CoA to form malonyl-CoA. This Rhodopseudomonas palustris (strain HaA2) protein is Acetyl-coenzyme A carboxylase carboxyl transferase subunit alpha.